Reading from the N-terminus, the 354-residue chain is NADH-quinone oxidoreductase subunit H (354 aa).

The next 8 membrane-spanning stretches (helical) occupy residues 22–42, 91–111, 124–144, 168–188, 203–223, 255–275, 291–311, and 326–346; these read ILIRAVLIVVPLLLCVAYLIL, YLIAPLMVLMPAVAIWAVIPF, LLYVMAISSVGVYGVILAGWA, MGFALVTVLMVSGSLNLSAIV, VLSWNWIPLLPMFGVYFISGV, LFFLAEYINMIIISTITALLF, IPGFFWLLIKVFLLLSVFIWI, and LGWKVFIPLTVGWLIIVAIWI.

Belongs to the complex I subunit 1 family. In terms of assembly, NDH-1 is composed of 14 different subunits. Subunits NuoA, H, J, K, L, M, N constitute the membrane sector of the complex.

It is found in the cell inner membrane. It catalyses the reaction a quinone + NADH + 5 H(+)(in) = a quinol + NAD(+) + 4 H(+)(out). Its function is as follows. NDH-1 shuttles electrons from NADH, via FMN and iron-sulfur (Fe-S) centers, to quinones in the respiratory chain. The immediate electron acceptor for the enzyme in this species is believed to be ubiquinone. Couples the redox reaction to proton translocation (for every two electrons transferred, four hydrogen ions are translocated across the cytoplasmic membrane), and thus conserves the redox energy in a proton gradient. This subunit may bind ubiquinone. The chain is NADH-quinone oxidoreductase subunit H from Cupriavidus pinatubonensis (strain JMP 134 / LMG 1197) (Cupriavidus necator (strain JMP 134)).